The following is a 513-amino-acid chain: HTH-type transcriptional regulatory protein TyrR (513 aa).

The ACT domain maps to 2-72 (RLEVFCEDRL…GVTDVRTVPW (71 aa)). The region spanning 78–114 (EHLALSALLEALPEPVLSVDMKSKVDMANPASCQLFG) is the PAS domain. A Sigma-54 factor interaction domain is found at 206 to 428 (IVAVSPKMKH…LKNAIYRALT (223 aa)). Residues 234–241 (GDTGTGKD) and 290–299 (ANGGSVLLDE) contribute to the ATP site. The segment at residues 482 to 502 (STRKLAKRLGVSHTAIANKLR) is a DNA-binding region (H-T-H motif).

As to quaternary structure, homodimer. In presence of tyrosine (or high concentrations of phenylalanine or tryptophan) and ATP, it self-associates to form an hexamer. At low tyrosine concentrations, homodimers can bind to certain recognition sequences referred to as 'strong TyrR boxes'. Homohexamers are the active repressing species, interacting with two or three tyrR boxes in the targeted regulatory DNA, including 'strong TyrR boxes' and lower-affinity sites called 'weak TyrR boxes'.

The protein localises to the cytoplasm. With respect to regulation, binding of ATP strongly enhances the affinity of TyrR for tyrosine. Functionally, dual transcriptional regulator of the TyrR regulon, which includes a number of genes coding for proteins involved in the biosynthesis or transport of the three aromatic amino acids, phenylalanine, tyrosine and tryptophan. These three aromatic amino acids act as effectors which bind to the TyrR protein to form an active regulatory protein. Modulates the expression of at least eight unlinked transcription units, including aroF, aroG, aroLM, aroP, mtr, tyrA, tyrB and tyrP. In most cases TyrR acts as a repressor, but positive effects have been observed on the tyrP gene, which is repressed in the presence of tyrosine and activated at high phenylalanine concentrations. Is also involved in activation, but not repression, of mtr expression in association with phenylalanine or tyrosine. Acts by binding specifically to TyrR boxes in the promoter region of the target genes. The polypeptide is HTH-type transcriptional regulatory protein TyrR (Escherichia coli (strain K12)).